The following is a 444-amino-acid chain: Type I restriction enzyme EcoDI specificity subunit (444 aa).

Belongs to the type-I restriction system S methylase family. As to quaternary structure, the type I restriction/modification system is composed of three polypeptides R, M and S; the restriction enzyme has stoichiometry R(2)M(2)S(1) while the methyltransferase is M(2)S(1).

Functionally, the specificity (S) subunit of a type I restriction enzyme; this subunit dictates DNA sequence specificity. The M and S subunits together form a methyltransferase (MTase) that methylates two adenine residues of the sequence 5'-TTAN(7)GTCY-3'. In the presence of the R subunit the complex can also act as an endonuclease, binding to the same target sequence but cutting the DNA some distance from this site. Whether the DNA is cut or modified depends on the methylation state of the target sequence. When the target site is unmodified, the DNA is cut. When the target site is hemimethylated, the complex acts as a maintenance MTase modifying the DNA so that both strands become methylated. After locating a non-methylated recognition site, the enzyme complex serves as a molecular motor that translocates DNA in an ATP-dependent manner until a collision occurs that triggers cleavage. This is Type I restriction enzyme EcoDI specificity subunit from Escherichia coli.